We begin with the raw amino-acid sequence, 926 residues long: Mating-type protein A-alpha Y3 (926 aa).

A DNA-binding region (homeobox) is located at residues Tyr-147–Leu-206. Disordered stretches follow at residues Ser-238 to Lys-281, Gln-308 to Ala-374, Gly-424 to Asn-452, and Arg-625 to Ser-734. Basic and acidic residues-rich tracts occupy residues Lys-267–Lys-281 and Asn-326–Ser-338. A compositionally biased stretch (polar residues) spans Pro-428–Thr-441. Over residues Lys-632 to Arg-660 the composition is skewed to basic and acidic residues. Composition is skewed to low complexity over residues Ser-669–Ser-687 and Ser-699–Ser-724.

It localises to the nucleus. In terms of biological role, specifies A-alpha-3 mating-type. May regulate the expression of genes specific to the homokaryotic cell type. The protein is Mating-type protein A-alpha Y3 of Schizophyllum commune (Split gill fungus).